A 104-amino-acid polypeptide reads, in one-letter code: Large ribosomal subunit protein uL24 (104 aa).

Belongs to the universal ribosomal protein uL24 family. Part of the 50S ribosomal subunit.

Its function is as follows. One of two assembly initiator proteins, it binds directly to the 5'-end of the 23S rRNA, where it nucleates assembly of the 50S subunit. Functionally, one of the proteins that surrounds the polypeptide exit tunnel on the outside of the subunit. The sequence is that of Large ribosomal subunit protein uL24 from Photobacterium profundum (strain SS9).